Reading from the N-terminus, the 668-residue chain is Methionine--tRNA ligase (668 aa).

Residues 11–21 (AYTNGPLHIGH) carry the 'HIGH' region motif. Cys-146, Cys-149, Cys-159, and Cys-162 together coordinate Zn(2+). The 'KMSKS' region motif lies at 332-336 (KMSTS). Thr-335 lines the ATP pocket. The tRNA-binding domain occupies 567–668 (EFNRLDLRVG…REVEPGERIR (102 aa)).

This sequence belongs to the class-I aminoacyl-tRNA synthetase family. MetG type 1 subfamily. Homodimer. Requires Zn(2+) as cofactor.

The protein resides in the cytoplasm. It carries out the reaction tRNA(Met) + L-methionine + ATP = L-methionyl-tRNA(Met) + AMP + diphosphate. Is required not only for elongation of protein synthesis but also for the initiation of all mRNA translation through initiator tRNA(fMet) aminoacylation. This Methanopyrus kandleri (strain AV19 / DSM 6324 / JCM 9639 / NBRC 100938) protein is Methionine--tRNA ligase.